Consider the following 478-residue polypeptide: UDP-N-acetylmuramate--L-alanine ligase (478 aa).

125–131 (GTHGKTT) lines the ATP pocket.

The protein belongs to the MurCDEF family.

The protein resides in the cytoplasm. It carries out the reaction UDP-N-acetyl-alpha-D-muramate + L-alanine + ATP = UDP-N-acetyl-alpha-D-muramoyl-L-alanine + ADP + phosphate + H(+). It functions in the pathway cell wall biogenesis; peptidoglycan biosynthesis. Functionally, cell wall formation. The polypeptide is UDP-N-acetylmuramate--L-alanine ligase (Dichelobacter nodosus (strain VCS1703A)).